Here is a 300-residue protein sequence, read N- to C-terminus: Ribosomal protein L11 methyltransferase (300 aa).

Residues threonine 152, glycine 173, aspartate 195, and asparagine 234 each contribute to the S-adenosyl-L-methionine site.

Belongs to the methyltransferase superfamily. PrmA family.

The protein resides in the cytoplasm. It catalyses the reaction L-lysyl-[protein] + 3 S-adenosyl-L-methionine = N(6),N(6),N(6)-trimethyl-L-lysyl-[protein] + 3 S-adenosyl-L-homocysteine + 3 H(+). In terms of biological role, methylates ribosomal protein L11. This is Ribosomal protein L11 methyltransferase from Burkholderia pseudomallei (strain 1710b).